The following is an 863-amino-acid chain: Facilitated trehalose transporter Tret1 (863 aa).

The interval 1–208 (MSGRDNRGAG…RIGFQQQKAT (208 aa)) is disordered. At 1–398 (MSGRDNRGAG…VYRPTTNPIY (398 aa)) the chain is on the cytoplasmic side. Residues 28–46 (KLKEKLTRAGEELGYHRVE) show a composition bias toward basic and acidic residues. Positions 47–59 (SNLSASNTGTSLD) are enriched in polar residues. Residues 72–85 (AAPQRHPQQQFPHL) show a composition bias toward low complexity. 2 stretches are compositionally biased toward polar residues: residues 114–129 (PPQQ…RSSG) and 177–187 (KPQQQGNNKAA). Phosphoserine is present on residues Ser-254, Ser-255, and Ser-256. The interval 286-307 (VLQGSSTDSDEEGDDAEHKRLI) is disordered. Ser-326 and Ser-328 each carry phosphoserine. The tract at residues 332-354 (FLTSRQNFQQQRSISTDSRKSRR) is disordered. Positions 336–347 (RQNFQQQRSIST) are enriched in polar residues. Residues 399–419 (IWTQVLAALSVSLGSLVVGFA) traverse the membrane as a helical segment. Over 420–446 (SAYTSPALVSMTNTNLTSFVVTPQAAS) the chain is Extracellular. Asn-434 carries N-linked (GlcNAc...) asparagine glycosylation. A helical membrane pass occupies residues 447–467 (WVGGIMPLAGLAGGIAGGPFI). At 468-479 (EYLGRRNTILAT) the chain is on the cytoplasmic side. A helical transmembrane segment spans residues 480–500 (AVPFIISWLLIACAVNVVMVL). At 501–503 (CGR) the chain is on the extracellular side. A helical transmembrane segment spans residues 504–524 (FLAGFCVGIASLSLPVYLGET). The Cytoplasmic segment spans residues 525-530 (VQPEVR). A helical transmembrane segment spans residues 531–551 (GTLGLLPTAFGNIGILLCFVA). At 552–558 (GTYMDWS) the chain is on the extracellular side. A helical membrane pass occupies residues 559 to 579 (MLAFLGGTLPVPFLILMFLIP). Residues 580-642 (ETPRWYVSRG…ELLKRSNLKP (63 aa)) lie on the Cytoplasmic side of the membrane. Residues 643 to 663 (LSISLGLMFFQQLSGINAVIF) traverse the membrane as a helical segment. Topologically, residues 664–679 (YTVQIFQDAGSTIDGN) are extracellular. The chain crosses the membrane as a helical span at residues 680–700 (VCTIIVGVVNFMATFIATVLI). Residues 701 to 706 (DRAGRK) lie on the Cytoplasmic side of the membrane. Residues 707–727 (ILLYVSNVAMILTLFVLGGFF) traverse the membrane as a helical segment. Over 728-746 (YCKSTGMDTSNVGWLPLSC) the chain is Extracellular. The helical transmembrane segment at 747–767 (FVVYILGFSLGFGPIPWLMMG) threads the bilayer. At 768 to 773 (EILPAK) the chain is on the cytoplasmic side. A helical transmembrane segment spans residues 774 to 794 (IRGSAASVATAFNWSCTFVVT). The Extracellular segment spans residues 795-807 (KSFQDMIDVMGAH). A helical membrane pass occupies residues 808 to 828 (GAFWMFGAICFVGLFFVIFYV). The Cytoplasmic segment spans residues 829–863 (PETQGKTLEDIERKMMGRVRRMSSVANIKPLSFNM). 2 positions are modified to phosphoserine: Ser-851 and Ser-852.

Belongs to the major facilitator superfamily. Sugar transporter (TC 2.A.1.1) family. Trehalose transporter subfamily.

It localises to the cell membrane. Functionally, low-capacity facilitative transporter for trehalose. Does not transport maltose, sucrose or lactose. Mediates the bidirectional transfer of trehalose. Responsible for the transport of trehalose synthesized in the fat body and the incorporation of trehalose into other tissues that require a carbon source, thereby regulating trehalose levels in the hemolymph. This chain is Facilitated trehalose transporter Tret1, found in Drosophila mojavensis (Fruit fly).